Reading from the N-terminus, the 490-residue chain is Serine hydroxymethyltransferase (490 aa).

Residues leucine 179 and glycine 183–leucine 185 contribute to the (6S)-5,6,7,8-tetrahydrofolate site. Position 291 is an N6-(pyridoxal phosphate)lysine (lysine 291). An Isoglutamyl lysine isopeptide (Lys-Gln) (interchain with Q-Cter in protein Pup) cross-link involves residue lysine 362.

Belongs to the SHMT family. As to quaternary structure, homodimer. Pyridoxal 5'-phosphate is required as a cofactor.

The protein resides in the cytoplasm. The enzyme catalyses (6R)-5,10-methylene-5,6,7,8-tetrahydrofolate + glycine + H2O = (6S)-5,6,7,8-tetrahydrofolate + L-serine. The protein operates within one-carbon metabolism; tetrahydrofolate interconversion. It participates in amino-acid biosynthesis; glycine biosynthesis; glycine from L-serine: step 1/1. Its function is as follows. Catalyzes the reversible interconversion of serine and glycine with tetrahydrofolate (THF) serving as the one-carbon carrier. This reaction serves as the major source of one-carbon groups required for the biosynthesis of purines, thymidylate, methionine, and other important biomolecules. Also exhibits THF-independent aldolase activity toward beta-hydroxyamino acids, producing glycine and aldehydes, via a retro-aldol mechanism. This is Serine hydroxymethyltransferase from Mycolicibacterium smegmatis (strain ATCC 700084 / mc(2)155) (Mycobacterium smegmatis).